Here is a 315-residue protein sequence, read N- to C-terminus: 7,8-didemethyl-8-hydroxy-5-deazariboflavin synthase (315 aa).

In terms of domain architecture, Radical SAM core spans Ile6–Asn237. [4Fe-4S] cluster is bound by residues Cys20, Cys24, and Cys27.

Belongs to the radical SAM superfamily. CofG family. Consists of two subunits, CofG and CofH. It depends on [4Fe-4S] cluster as a cofactor.

The enzyme catalyses 5-amino-5-(4-hydroxybenzyl)-6-(D-ribitylimino)-5,6-dihydrouracil + S-adenosyl-L-methionine = 7,8-didemethyl-8-hydroxy-5-deazariboflavin + 5'-deoxyadenosine + L-methionine + NH4(+) + H(+). It participates in cofactor biosynthesis; coenzyme F0 biosynthesis. In terms of biological role, catalyzes the radical-mediated synthesis of 7,8-didemethyl-8-hydroxy-5-deazariboflavin from 5-amino-5-(4-hydroxybenzyl)-6-(D-ribitylimino)-5,6-dihydrouracil. In Thermosynechococcus vestitus (strain NIES-2133 / IAM M-273 / BP-1), this protein is 7,8-didemethyl-8-hydroxy-5-deazariboflavin synthase.